We begin with the raw amino-acid sequence, 227 residues long: Large ribosomal subunit protein uL1 (227 aa).

Belongs to the universal ribosomal protein uL1 family. Part of the 50S ribosomal subunit.

Its function is as follows. Binds directly to 23S rRNA. The L1 stalk is quite mobile in the ribosome, and is involved in E site tRNA release. In terms of biological role, protein L1 is also a translational repressor protein, it controls the translation of the L11 operon by binding to its mRNA. The polypeptide is Large ribosomal subunit protein uL1 (Tropheryma whipplei (strain TW08/27) (Whipple's bacillus)).